A 351-amino-acid polypeptide reads, in one-letter code: Uroporphyrinogen decarboxylase (351 aa).

Residues 25–29 (RQAGR), Asp74, Tyr151, Ser206, and His325 contribute to the substrate site.

This sequence belongs to the uroporphyrinogen decarboxylase family. Homodimer.

It is found in the cytoplasm. It catalyses the reaction uroporphyrinogen III + 4 H(+) = coproporphyrinogen III + 4 CO2. It participates in porphyrin-containing compound metabolism; protoporphyrin-IX biosynthesis; coproporphyrinogen-III from 5-aminolevulinate: step 4/4. Catalyzes the decarboxylation of four acetate groups of uroporphyrinogen-III to yield coproporphyrinogen-III. This Prosthecochloris aestuarii (strain DSM 271 / SK 413) protein is Uroporphyrinogen decarboxylase.